The following is a 137-amino-acid chain: Beta-synuclein (137 aa).

A run of 2 repeats spans residues 20–30 and 31–41. A 4 X 11 AA tandem repeats of [EGS]-K-T-K-[EQ]-[GQ]-V-X(4) region spans residues 20–67; the sequence is EKTKQGVTEAAEKTKEGVLYVGSKTKEGVVQGVASVAEKTKEQASHLG. Residues 42-56 form a 3; approximate repeat; it reads SKTKEGVVQGVASVA. Repeat 4 spans residues 57 to 67; the sequence is EKTKEQASHLG. A compositionally biased stretch (basic and acidic residues) spans 88–97; it reads EFPTDLKPEE. Residues 88–137 are disordered; that stretch reads EFPTDLKPEEVAQEAAEEPLIEPLMEPEGESYEDSPQEEYQEYEPEAKGP. Residues 98-131 are compositionally biased toward acidic residues; it reads VAQEAAEEPLIEPLMEPEGESYEDSPQEEYQEYE. Phosphoserine; by BARK1, CK2 and GRK5 is present on S118.

It belongs to the synuclein family. In terms of processing, phosphorylated. Phosphorylation by G-protein coupled receptor kinases (GRK) is more efficient than phosphorylation by CK1, CK2 and CaM-kinase II. As to expression, expressed specifically in brain.

It localises to the cytoplasm. Its function is as follows. May be involved in neuronal plasticity. This Rattus norvegicus (Rat) protein is Beta-synuclein (Sncb).